A 968-amino-acid chain; its full sequence is Insulin receptor substrate 1 (968 aa).

The PH domain occupies 8–109; it reads GMALSGYLKK…WLDKLLVLQR (102 aa). Positions 122 to 236 constitute an IRS-type PTB domain; it reads YDHVWQVVIQ…SAMSAKTESN (115 aa). The tract at residues 248–269 is disordered; the sequence is DLSHEPMRKRSSSANEASKPIN. A phosphoserine mark is found at serine 286 and serine 287. The span at 304-329 shows a compositional bias: polar residues; it reads RNGTLSESSNQTYFGSNHGLRSNTIS. The interval 304–370 is disordered; the sequence is RNGTLSESSN…VDESDDNGSF (67 aa). The residue at position 342 (serine 342) is a Phosphoserine. Position 411 is a phosphotyrosine; by INSR (tyrosine 411). The short motif at 411–414 is the YXXM motif 1 element; sequence YIPM. The disordered stretch occupies residues 528–555; it reads TANRSQSSITKEGTSYGSSANRQKKSTS. The segment covering 529–555 has biased composition (polar residues); it reads ANRSQSSITKEGTSYGSSANRQKKSTS. At serine 555 the chain carries Phosphoserine. A YXXM motif 2 motif is present at residues 641-644; that stretch reads YLEM. Basic and acidic residues predominate over residues 697-711; that stretch reads EKWREQPSRSEEKKS. Residues 697 to 739 form a disordered region; it reads EKWREQPSRSEEKKSNSPLNDNTFSSKPTNVESTSKSHDVHSA. Polar residues predominate over residues 712–730; sequence NSPLNDNTFSSKPTNVEST. Residue tyrosine 911 is modified to Phosphotyrosine; by INSR. Residues 922–968 are disordered; that stretch reads QNPAKYLKRGSRESPPVSACPEDGNTYAKIDFDQSDSSSSSSNIFNT. Phosphoserine occurs at positions 932 and 935. Position 948 is a phosphotyrosine; by INSR (tyrosine 948). The span at 956-968 shows a compositional bias: low complexity; sequence SDSSSSSSNIFNT.

Bindings to phosphatidylinositol 3-kinase and SHP2.

Functionally, activates phosphatidylinositol 3-kinase when bound to the regulatory p85 subunit. May mediate the control of various cellular processes by insulin-like peptides. When phosphorylated by the insulin receptor binds specifically to various cellular proteins containing SH2 domains. Involved in control of cell proliferation, cell size, and body and organ growth throughout development. Also has a role in a signaling pathway controlling the physiological response required to endure periods of low nutrient conditions. Insulin/insulin-like growth factor (IGF) signaling pathway has a role in regulating aging and is necessary in the ovary for vitellogenic maturation. In Drosophila melanogaster (Fruit fly), this protein is Insulin receptor substrate 1 (chico).